A 120-amino-acid polypeptide reads, in one-letter code: UPF0231 protein YacL (120 aa).

This sequence belongs to the UPF0231 family.

This Escherichia coli O6:K15:H31 (strain 536 / UPEC) protein is UPF0231 protein YacL.